The sequence spans 294 residues: tRNA dimethylallyltransferase (294 aa).

ATP is bound at residue 10–17; it reads GPTAVGKT. Substrate is bound at residue 12 to 17; the sequence is TAVGKT. The tract at residues 35–38 is interaction with substrate tRNA; that stretch reads DSQQ.

Belongs to the IPP transferase family. Monomer. The cofactor is Mg(2+).

The enzyme catalyses adenosine(37) in tRNA + dimethylallyl diphosphate = N(6)-dimethylallyladenosine(37) in tRNA + diphosphate. Catalyzes the transfer of a dimethylallyl group onto the adenine at position 37 in tRNAs that read codons beginning with uridine, leading to the formation of N6-(dimethylallyl)adenosine (i(6)A). This chain is tRNA dimethylallyltransferase, found in Streptococcus pneumoniae serotype 2 (strain D39 / NCTC 7466).